A 285-amino-acid chain; its full sequence is HTH-type transcriptional regulator MurR (285 aa).

An HTH rpiR-type domain is found at 1–77; it reads MLYLTKISNA…MALIGEYSAS (77 aa). The H-T-H motif DNA-binding region spans 37–56; it reads SRQMAKQLGISQSSIVKFAQ. The SIS domain maps to 128–268; it reads IIDVISKAQF…FVGLVQLNDV (141 aa).

In terms of assembly, homotetramer.

Its pathway is amino-sugar metabolism; N-acetylmuramate degradation [regulation]. Functionally, represses the expression of the murPQ operon involved in the uptake and degradation of N-acetylmuramic acid (MurNAc). Binds to two adjacent inverted repeats within the operator region. MurNAc 6-phosphate, the substrate of MurQ, is the specific inducer that weakens binding of MurR to the operator. The chain is HTH-type transcriptional regulator MurR from Escherichia coli (strain B / BL21-DE3).